Consider the following 489-residue polypeptide: UDP-N-acetylmuramoylalanine--D-glutamate ligase (489 aa).

Position 126–132 (126–132 (GTNGKTT)) interacts with ATP.

This sequence belongs to the MurCDEF family.

The protein localises to the cytoplasm. It catalyses the reaction UDP-N-acetyl-alpha-D-muramoyl-L-alanine + D-glutamate + ATP = UDP-N-acetyl-alpha-D-muramoyl-L-alanyl-D-glutamate + ADP + phosphate + H(+). Its pathway is cell wall biogenesis; peptidoglycan biosynthesis. Its function is as follows. Cell wall formation. Catalyzes the addition of glutamate to the nucleotide precursor UDP-N-acetylmuramoyl-L-alanine (UMA). This is UDP-N-acetylmuramoylalanine--D-glutamate ligase from Mycobacterium avium (strain 104).